A 728-amino-acid chain; its full sequence is Protein Hook homolog 1 (728 aa).

Met-1 is subject to N-acetylmethionine. Positions 1 to 555 (MEETQPPPQP…LKQKLEAHME (555 aa)) are sufficient for interaction with microtubules. The 117-residue stretch at 12 to 128 (LPLCDSLMIW…RLLQLILGCA (117 aa)) folds into the Calponin-homology (CH) domain. Coiled-coil stretches lie at residues 169 to 434 (PNDA…RCSQ) and 477 to 658 (LRLQ…AKFR). A sufficient for homodimerization, interaction wit HOOK2, HOOK3 and AP4M1 region spans residues 169-444 (PNDAVGELEQ…VQQDHLNQTD (276 aa)). A Phosphoserine modification is found at Ser-235. The tract at residues 481-512 (QEGSENERIEELQEQLEQKHRKMNELETEQRL) is disordered. A compositionally biased stretch (basic and acidic residues) spans 503–512 (MNELETEQRL). Positions 657 to 728 (FRDYEEKLIV…SVKVPATTSD (72 aa)) are sufficient for interaction with AKTIP and VPS18. The residue at position 699 (Thr-699) is a Phosphothreonine. Residues Ser-719 and Ser-727 each carry the phosphoserine modification.

It belongs to the hook family. As to quaternary structure, self-associates. Component of the FTS/Hook/FHIP complex (FHF complex), composed of AKTIP/FTS, FHIP1B, and one or more members of the Hook family of proteins HOOK1, HOOK2, and HOOK3. Interacts directly with AKTIP/FTS, HOOK2 and HOOK3. Associates with several subunits of the homotypic vesicular sorting complex (the HOPS complex) including VPS16, VPS18, VPS39 and VPS41; these interactions may be indirect. Interacts with CCDC181. Interacts (via coiled-coil region) with RIMBP3 (via C-terminus). Interacts with LRGUK (via guanylate kinase-like domain). Interacts with microtubules. May interact with CLN3. Interacts with AP4M1; the interaction is direct, mediates the interaction between FTS-Hook-FHIP (FHF) complex and AP-4 and the perinuclear distribution of AP-4.

It is found in the cytoplasm. Its subcellular location is the cytoskeleton. Its function is as follows. Component of the FTS/Hook/FHIP complex (FHF complex). The FHF complex may function to promote vesicle trafficking and/or fusion via the homotypic vesicular protein sorting complex (the HOPS complex). FHF complex promotes the distribution of AP-4 complex to the perinuclear area of the cell. Required for spermatid differentiation. Probably involved in the positioning of the microtubules of the manchette and the flagellum in relation to the membrane skeleton. The sequence is that of Protein Hook homolog 1 from Homo sapiens (Human).